Consider the following 426-residue polypeptide: MFTFSSSFMFDFELTRLLGSASSGGCDVGEFKSAVGKIKKDDPESWSVAWKEQAERAQRIGDQAAKAGYRLLARNAYLRASNYFRVTPYMFSNDDARVVPLIEQSISSFKKAAVLMDGEVICVEIPYEKGITLPGYLFLPPSYARLPGKVPIVMYAAGADSTKEELYFLYGHTGPQLGYAVLCLEGPGQGLLLKKSKVPLRPDFEVVAEKIVEFLDNLSESRPTLELDTGRLAMAGAATGGYFALRAATNPRVKACISIDPFFSLWELCLSRAPKAFFKLWDSGWVPDSTFDTFTDVHGRGNFQSGWEINLGRSSMGAEKPTAMFRRFKDFTLEPAAGEVPILDKIRCAVFLTGPGAGQDMYSSAEESTFKIHRLLSNVPDSNKEVWVPTDVAEGGLTAKIGAWALLAQKTFEFLDKHFDIKRPEL.

Belongs to the AB hydrolase superfamily. In terms of assembly, homodimer.

Its pathway is mycotoxin biosynthesis. In terms of biological role, alpha/beta hydrolasee; part of the gene cluster that mediates the biosynthesis of pyrrocidines, fungal natural products containing a macrocyclic para-cyclophane connected to a decahydrofluorene ring system that show potent antibiotic activities toward Gram-negative bacteria. Within the pathway, pydG catalyzes the Knoevenagel condensation that affords the 3-pyrrolin-2-one ring, using as substrate the polyketide-tyrosyl acyl thioester product of pydA. The pathway begins with the PKS-NRPS pydA which, with the help of the trans-enoyl reductase pydC, synthesizes the polyketide-tyrosyl acyl thioester product which can be reductively off-loaded by the terminal reductase (R) domain in pydA. The alpha/beta hydrolase pydG is then required to catalyze the subsequent Knoevenagel condensation that affords the 3-pyrrolin-2-one ring, whereas the four proteins pydB, pydE, pydX and pydZ then function synergistically to form the cyclophane. PydB and the membrane-bound pydX and pydZ are lipid-binding proteins that can sequester and mold the pdyG product into the inverse S-shape. Binding of the medium chain reductase pydE to the complex would trigger the cascade oxidative cyclization. PydY is involved in the Diels-Alder cycloaddition that forms the decahydrofluorene core. Additional non-enzymatic hydroxylation yields pyrrocidine A2 which can be further reduced into pyrrocidine B by an endogenous reductase. The sequence is that of Alpha/beta hydrolase pydG from Acremonium sp.